The primary structure comprises 433 residues: Glutamate-1-semialdehyde 2,1-aminomutase (433 aa).

Position 273 is an N6-(pyridoxal phosphate)lysine (Lys273).

This sequence belongs to the class-III pyridoxal-phosphate-dependent aminotransferase family. HemL subfamily. Homodimer. Pyridoxal 5'-phosphate serves as cofactor.

Its subcellular location is the cytoplasm. It carries out the reaction (S)-4-amino-5-oxopentanoate = 5-aminolevulinate. It functions in the pathway porphyrin-containing compound metabolism; protoporphyrin-IX biosynthesis; 5-aminolevulinate from L-glutamyl-tRNA(Glu): step 2/2. The protein operates within porphyrin-containing compound metabolism; chlorophyll biosynthesis. The protein is Glutamate-1-semialdehyde 2,1-aminomutase of Rippkaea orientalis (strain PCC 8801 / RF-1) (Cyanothece sp. (strain PCC 8801)).